Here is a 608-residue protein sequence, read N- to C-terminus: Serine/threonine-protein kinase BUR1 (608 aa).

Residues 39–346 (YEIIQKLGQG…ALDALNHNYF (308 aa)) enclose the Protein kinase domain. Residues 45-53 (LGQGTFGVV) and K68 contribute to the ATP site. The Proton acceptor role is filled by D174. Disordered regions lie at residues 383 to 419 (HEAN…LALP) and 443 to 571 (YIPK…FDED). Over residues 400–411 (YNNSNNYPRNRN) the composition is skewed to low complexity. Residues 471–482 (LRDRSPRREGHI) show a composition bias toward basic and acidic residues. Residues 487 to 502 (STTNSNNISSNSSASN) show a composition bias toward low complexity. Composition is skewed to polar residues over residues 503 to 512 (VGGTLSNPTH) and 539 to 548 (PQSSSRNVSD). Acidic residues predominate over residues 559 to 571 (EQNESDLTDFDED).

This sequence belongs to the protein kinase superfamily. CMGC Ser/Thr protein kinase family. CDC2/CDKX subfamily.

The protein localises to the nucleus. The enzyme catalyses L-seryl-[protein] + ATP = O-phospho-L-seryl-[protein] + ADP + H(+). It carries out the reaction L-threonyl-[protein] + ATP = O-phospho-L-threonyl-[protein] + ADP + H(+). The catalysed reaction is [DNA-directed RNA polymerase] + ATP = phospho-[DNA-directed RNA polymerase] + ADP + H(+). Functionally, serine/threonine-protein kinase involved in transcription regulation. Phosphorylates the UBC2/RAD6 ubiquitin-conjugating enzyme (E2), leading to monoubiquitination of histone H2B and the silencing of telomeric-associated genes. Also required for histone H3 methylation. Necessary for the recovery from pheromone-induced growth arrest in the cell cycle G1 phase. This Debaryomyces hansenii (strain ATCC 36239 / CBS 767 / BCRC 21394 / JCM 1990 / NBRC 0083 / IGC 2968) (Yeast) protein is Serine/threonine-protein kinase BUR1 (BUR1).